A 268-amino-acid chain; its full sequence is 4-pyridoxolactonase (268 aa).

Zn(2+)-binding residues include His-96, His-98, Asp-100, His-101, His-185, Asp-207, and His-252. The Proton donor/acceptor role is filled by Asp-100.

The protein belongs to the metallo-beta-lactamase superfamily. As to quaternary structure, homodimer. Zn(2+) serves as cofactor.

It catalyses the reaction 4-pyridoxolactone + H2O = 4-pyridoxate + H(+). The protein operates within cofactor degradation; B6 vitamer degradation; 4-pyridoxate from pyridoxal: step 2/2. With respect to regulation, inhibited by Hg(2+). Involved in the degradation of pyridoxine or pyridoxamine (free, phosphate-unbound, forms of vitamin B6). Hydrolyzes 4-pyridoxolactone to 4-pyridoxic acid. Has lower activity toward N-hexanoyl-D,L-homoserine lactone, but is not active toward 5-pyridoxolactone and gamma-butyrolactone. The sequence is that of 4-pyridoxolactonase from Mesorhizobium japonicum (strain LMG 29417 / CECT 9101 / MAFF 303099) (Mesorhizobium loti (strain MAFF 303099)).